The primary structure comprises 146 residues: Transcription antitermination protein NusB (146 aa).

The protein belongs to the NusB family.

Its function is as follows. Involved in transcription antitermination. Required for transcription of ribosomal RNA (rRNA) genes. Binds specifically to the boxA antiterminator sequence of the ribosomal RNA (rrn) operons. This chain is Transcription antitermination protein NusB, found in Koribacter versatilis (strain Ellin345).